Consider the following 205-residue polypeptide: MIDPDGFRPNVGIVLMRQDGQVFWARRVRRDGWQFPQGGMNTDETPVEAMYRELREETGLLPEHVELLGATPGWLRYRLPSRAVRRNERQVCIGQKQVWFLLRFTGDESHLKLDHTDTPEFDHWRWVDFWYPVEHVVMFKRGVYARALRHLAPIAQNLAGPAAVGAMPERALEAWLPGSSAAGHDSPRKRPRKRSGARPMRINND.

One can recognise a Nudix hydrolase domain in the interval 6-149 (GFRPNVGIVL…KRGVYARALR (144 aa)). Residues 38-59 (GGMNTDETPVEAMYRELREETG) carry the Nudix box motif. The tract at residues 177-205 (PGSSAAGHDSPRKRPRKRSGARPMRINND) is disordered. Residues 187-196 (PRKRPRKRSG) show a composition bias toward basic residues.

Belongs to the Nudix hydrolase family. RppH subfamily. A divalent metal cation is required as a cofactor.

Functionally, accelerates the degradation of transcripts by removing pyrophosphate from the 5'-end of triphosphorylated RNA, leading to a more labile monophosphorylated state that can stimulate subsequent ribonuclease cleavage. This Xanthomonas oryzae pv. oryzae (strain MAFF 311018) protein is RNA pyrophosphohydrolase.